Consider the following 217-residue polypeptide: Probable transaldolase (217 aa).

The active-site Schiff-base intermediate with substrate is Lys83.

This sequence belongs to the transaldolase family. Type 3B subfamily.

The protein localises to the cytoplasm. The enzyme catalyses D-sedoheptulose 7-phosphate + D-glyceraldehyde 3-phosphate = D-erythrose 4-phosphate + beta-D-fructose 6-phosphate. It participates in carbohydrate degradation; pentose phosphate pathway; D-glyceraldehyde 3-phosphate and beta-D-fructose 6-phosphate from D-ribose 5-phosphate and D-xylulose 5-phosphate (non-oxidative stage): step 2/3. In terms of biological role, transaldolase is important for the balance of metabolites in the pentose-phosphate pathway. This is Probable transaldolase from Ruegeria pomeroyi (strain ATCC 700808 / DSM 15171 / DSS-3) (Silicibacter pomeroyi).